The chain runs to 546 residues: Chaperonin GroEL (546 aa).

Residues 30-33 (TLGP), lysine 51, 87-91 (DGTTT), glycine 415, and aspartate 497 contribute to the ATP site. The segment at 527 to 546 (PKKDSPAPAMPGGGMGGMDF) is disordered. A compositionally biased stretch (gly residues) spans 537–546 (PGGGMGGMDF).

The protein belongs to the chaperonin (HSP60) family. In terms of assembly, forms a cylinder of 14 subunits composed of two heptameric rings stacked back-to-back. Interacts with the co-chaperonin GroES.

It is found in the cytoplasm. The catalysed reaction is ATP + H2O + a folded polypeptide = ADP + phosphate + an unfolded polypeptide.. In terms of biological role, together with its co-chaperonin GroES, plays an essential role in assisting protein folding. The GroEL-GroES system forms a nano-cage that allows encapsulation of the non-native substrate proteins and provides a physical environment optimized to promote and accelerate protein folding. In Methylorubrum populi (strain ATCC BAA-705 / NCIMB 13946 / BJ001) (Methylobacterium populi), this protein is Chaperonin GroEL.